Reading from the N-terminus, the 263-residue chain is tRNA pseudouridine synthase A (263 aa).

Asp-73 serves as the catalytic Nucleophile. Substrate is bound at residue Tyr-131.

This sequence belongs to the tRNA pseudouridine synthase TruA family. As to quaternary structure, homodimer.

It catalyses the reaction uridine(38/39/40) in tRNA = pseudouridine(38/39/40) in tRNA. Its function is as follows. Formation of pseudouridine at positions 38, 39 and 40 in the anticodon stem and loop of transfer RNAs. The polypeptide is tRNA pseudouridine synthase A (Mycoplasmoides gallisepticum (strain R(low / passage 15 / clone 2)) (Mycoplasma gallisepticum)).